Consider the following 260-residue polypeptide: Tetraspanin-14 (260 aa).

At 1–10 (MKSQSHKPWN) the chain is on the cytoplasmic side. Residues 11–31 (LVAGIFFPIITFFLSAPLVGH) form a helical membrane-spanning segment. The Extracellular segment spans residues 32–54 (ALYLFCMRNDHVYYRDFQSTLPR). Residues 55 to 75 (VQTLVSVSLLALFLLSNIGMF) form a helical membrane-spanning segment. The Cytoplasmic segment spans residues 76 to 80 (LRPRR). The helical transmembrane segment at 81–101 (LSYFLVIVFFIGFAYSGVYKM) threads the bilayer. The Extracellular portion of the chain corresponds to 102-260 (ESRRFSPTPM…FLSSLTSLFR (159 aa)). Residue asparagine 182 is glycosylated (N-linked (GlcNAc...) asparagine).

The protein belongs to the tetraspanin (TM4SF) family.

Its subcellular location is the membrane. Its function is as follows. May be involved in the regulation of cell differentiation. This is Tetraspanin-14 (TET14) from Arabidopsis thaliana (Mouse-ear cress).